Reading from the N-terminus, the 117-residue chain is MSKTSPRLSSLIAELKSVARDSGADVWHDVADRLEKPRSTHAEVNLSRIERYASEDETVIVPGKVLGSGALRKSVTVAAVDFSSSAATKIEHADGEAVHLEQAVEQNPDGTDVRVIR.

This sequence belongs to the eukaryotic ribosomal protein eL18 family.

The sequence is that of Large ribosomal subunit protein eL18 from Halobacterium salinarum (strain ATCC 29341 / DSM 671 / R1).